We begin with the raw amino-acid sequence, 75 residues long: uncharacterized protein (75 aa).

This sequence belongs to the HSBP1 family.

This is an uncharacterized protein from Schizosaccharomyces pombe (strain 972 / ATCC 24843) (Fission yeast).